The following is a 227-amino-acid chain: MTAATATANGNHSIEDPVVMKVQAASPIQETDFFENLYQMECFRTGEFYLKSGQMTPIYIDLRRIMSSPRVLRMAAQAMCEKIVASNLKFDYVVGVPYAALPLATLVSDILNVPMLMKRKEAKAYGTKQLIEGVYQPGGTVLLVEDVVTSGESIRETAEAIRNENLLVTDAIAVLDRQQGATANLAEDNLNFLSFLTMEKILDGLITKNEMTEERKHEIIAHLAKPF.

5-phospho-alpha-D-ribose 1-diphosphate is bound by residues Lys-51, Arg-119, Lys-120, and Lys-123. Orotate is bound by residues Thr-149 and Arg-177.

Belongs to the purine/pyrimidine phosphoribosyltransferase family. PyrE subfamily. Homodimer. As to expression, expressed in body wall muscles, spermatheca and vulva muscles.

It catalyses the reaction orotidine 5'-phosphate + diphosphate = orotate + 5-phospho-alpha-D-ribose 1-diphosphate. The enzyme catalyses UMP + diphosphate = 5-phospho-alpha-D-ribose 1-diphosphate + uracil. The protein operates within pyrimidine metabolism; UMP biosynthesis via de novo pathway; UMP from orotate: step 1/2. It participates in pyrimidine metabolism; UMP biosynthesis via salvage pathway; UMP from uracil: step 1/1. Functionally, phosphoribosyltransferase which catalyzes the formation of UMP from uracil in vitro and thus may be involved in UMP biosynthesis via the salvage pathway. May also participate in the first step of UMP synthesis by catalyzing the formation of orotidine 5'-phosphate, a UMP precursor, from orotate. The sequence is that of Orotate phosphoribosyltransferase from Caenorhabditis elegans.